The primary structure comprises 691 residues: Elongation factor G (691 aa).

Positions 8 to 282 (ERVRNIGIAA…AVVDYLPAPI (275 aa)) constitute a tr-type G domain. GTP is bound by residues 17-24 (AHIDAGKT), 81-85 (DTPGH), and 135-138 (NKMD).

This sequence belongs to the TRAFAC class translation factor GTPase superfamily. Classic translation factor GTPase family. EF-G/EF-2 subfamily.

The protein localises to the cytoplasm. Its function is as follows. Catalyzes the GTP-dependent ribosomal translocation step during translation elongation. During this step, the ribosome changes from the pre-translocational (PRE) to the post-translocational (POST) state as the newly formed A-site-bound peptidyl-tRNA and P-site-bound deacylated tRNA move to the P and E sites, respectively. Catalyzes the coordinated movement of the two tRNA molecules, the mRNA and conformational changes in the ribosome. This is Elongation factor G from Thermosynechococcus vestitus (strain NIES-2133 / IAM M-273 / BP-1).